The chain runs to 272 residues: Indole-3-glycerol phosphate synthase (272 aa).

This sequence belongs to the TrpC family.

It carries out the reaction 1-(2-carboxyphenylamino)-1-deoxy-D-ribulose 5-phosphate + H(+) = (1S,2R)-1-C-(indol-3-yl)glycerol 3-phosphate + CO2 + H2O. Its pathway is amino-acid biosynthesis; L-tryptophan biosynthesis; L-tryptophan from chorismate: step 4/5. The protein is Indole-3-glycerol phosphate synthase of Mycolicibacterium gilvum (strain PYR-GCK) (Mycobacterium gilvum (strain PYR-GCK)).